Consider the following 527-residue polypeptide: tRNA-2-methylthio-N(6)-dimethylallyladenosine synthase (527 aa).

Positions 1–27 are disordered; it reads MMNEKQRLQYTAQIETDHPTDKKSALD. Over residues 15-27 the composition is skewed to basic and acidic residues; sequence ETDHPTDKKSALD. An MTTase N-terminal domain is found at 84–202; that stretch reads RKFYIRTYGC…LPYILKEAYM (119 aa). Residues Cys93, Cys129, Cys163, Cys239, Cys243, and Cys246 each contribute to the [4Fe-4S] cluster site. Residues 225-455 enclose the Radical SAM core domain; sequence RKGNIKAWVN…NALVNEISAK (231 aa). In terms of domain architecture, TRAM spans 458–521; sequence KEYEGQVVEV…TWTLNGEMVE (64 aa).

Belongs to the methylthiotransferase family. MiaB subfamily. Monomer. The cofactor is [4Fe-4S] cluster.

The protein localises to the cytoplasm. The catalysed reaction is N(6)-dimethylallyladenosine(37) in tRNA + (sulfur carrier)-SH + AH2 + 2 S-adenosyl-L-methionine = 2-methylsulfanyl-N(6)-dimethylallyladenosine(37) in tRNA + (sulfur carrier)-H + 5'-deoxyadenosine + L-methionine + A + S-adenosyl-L-homocysteine + 2 H(+). Functionally, catalyzes the methylthiolation of N6-(dimethylallyl)adenosine (i(6)A), leading to the formation of 2-methylthio-N6-(dimethylallyl)adenosine (ms(2)i(6)A) at position 37 in tRNAs that read codons beginning with uridine. This Anoxybacillus flavithermus (strain DSM 21510 / WK1) protein is tRNA-2-methylthio-N(6)-dimethylallyladenosine synthase.